The chain runs to 301 residues: Sulfate adenylyltransferase subunit 2 (301 aa).

The segment at 279–301 (RQGRLIDHDQDGSMEKKKQEGYF) is disordered.

This sequence belongs to the PAPS reductase family. CysD subfamily. As to quaternary structure, heterodimer composed of CysD, the smaller subunit, and CysN.

The enzyme catalyses sulfate + ATP + H(+) = adenosine 5'-phosphosulfate + diphosphate. Its pathway is sulfur metabolism; hydrogen sulfide biosynthesis; sulfite from sulfate: step 1/3. Functionally, with CysN forms the ATP sulfurylase (ATPS) that catalyzes the adenylation of sulfate producing adenosine 5'-phosphosulfate (APS) and diphosphate, the first enzymatic step in sulfur assimilation pathway. APS synthesis involves the formation of a high-energy phosphoric-sulfuric acid anhydride bond driven by GTP hydrolysis by CysN coupled to ATP hydrolysis by CysD. This chain is Sulfate adenylyltransferase subunit 2, found in Geotalea uraniireducens (strain Rf4) (Geobacter uraniireducens).